The chain runs to 618 residues: Delta-like protein 3 (618 aa).

A signal peptide spans 1–26 (MVSPRMSGLLSQTVILALIFLPQTRP). The Extracellular portion of the chain corresponds to 27-492 (AGVFELQIHS…LRPGDPQRYL (466 aa)). The 40-residue stretch at 176–215 (ARCEPPAVGTACTRLCRPRSAPSRCGPGLRPCAPLEDECE) folds into the DSL domain. 6 consecutive EGF-like domains span residues 216–249 (APLV…PLCT), 274–310 (GPGP…LRCE), 312–351 (SGVT…SNCE), 353–389 (RVDR…PRCE), 391–427 (DLDD…RDCR), and 429–465 (RADP…ARCE). 18 cysteine pairs are disulfide-bonded: Cys220–Cys231, Cys224–Cys237, Cys239–Cys248, Cys278–Cys289, Cys283–Cys298, Cys300–Cys309, Cys316–Cys327, Cys321–Cys339, Cys341–Cys350, Cys357–Cys368, Cys362–Cys377, Cys379–Cys388, Cys395–Cys406, Cys400–Cys415, Cys417–Cys426, Cys433–Cys444, Cys438–Cys453, and Cys455–Cys464. The chain crosses the membrane as a helical span at residues 493–513 (LPPALGLLVAAGVAGAALLLV). At 514-618 (HVRRRGHSQD…PYPSSILSVK (105 aa)) the chain is on the cytoplasmic side. Positions 546 to 562 (NLRTQEGSGDGPSSSVD) are enriched in polar residues. The segment at 546–566 (NLRTQEGSGDGPSSSVDWNRP) is disordered.

In terms of assembly, can bind and activate Notch-1 or another Notch receptor. Ubiquitinated by MIB (MIB1 or MIB2), leading to its endocytosis and subsequent degradation.

The protein resides in the membrane. In terms of biological role, inhibits primary neurogenesis. May be required to divert neurons along a specific differentiation pathway. Plays a role in the formation of somite boundaries during segmentation of the paraxial mesoderm. The sequence is that of Delta-like protein 3 (DLL3) from Homo sapiens (Human).